We begin with the raw amino-acid sequence, 159 residues long: Transcription elongation factor GreA (159 aa).

Residues 2 to 77 (EENKEFLLTQ…LENMVRKAVI (76 aa)) are a coiled coil.

Belongs to the GreA/GreB family.

Functionally, necessary for efficient RNA polymerase transcription elongation past template-encoded arresting sites. The arresting sites in DNA have the property of trapping a certain fraction of elongating RNA polymerases that pass through, resulting in locked ternary complexes. Cleavage of the nascent transcript by cleavage factors such as GreA or GreB allows the resumption of elongation from the new 3'terminus. GreA releases sequences of 2 to 3 nucleotides. This is Transcription elongation factor GreA from Clostridioides difficile (strain 630) (Peptoclostridium difficile).